We begin with the raw amino-acid sequence, 148 residues long: Large ribosomal subunit protein bL9 (148 aa).

The protein belongs to the bacterial ribosomal protein bL9 family.

Functionally, binds to the 23S rRNA. This is Large ribosomal subunit protein bL9 from Leptospira biflexa serovar Patoc (strain Patoc 1 / Ames).